A 561-amino-acid polypeptide reads, in one-letter code: Putative transport protein YbjL (561 aa).

The next 5 membrane-spanning stretches (helical) occupy residues 8-28 (LLNG…LCLG), 32-52 (LGSV…LLGQ), 66-86 (FMLF…SIFF), 94-114 (MLAL…GKLF), and 158-178 (NLSL…IVGA). 2 consecutive RCK C-terminal domains span residues 200–288 (RGLD…SLRN) and 292–373 (VFDR…RIGF). 5 helical membrane-spanning segments follow: residues 383 to 403 (LLAF…TFQF), 406 to 426 (FSFG…LGFL), 447 to 467 (FGLM…ISNG), 475 to 495 (MLIA…LFGA), and 540 to 560 (AIAN…WPGL).

It belongs to the AAE transporter (TC 2.A.81) family. YbjL subfamily.

The protein localises to the cell membrane. This chain is Putative transport protein YbjL, found in Salmonella gallinarum (strain 287/91 / NCTC 13346).